The following is a 389-amino-acid chain: G2/M cell-cycle inhibitor DR6 (389 aa).

The protein belongs to the Roseolovirus DR6 family.

The protein localises to the host nucleus. Functionally, inhibits the host G2/M cell-cycle progression in a p53-independent manner. This chain is G2/M cell-cycle inhibitor DR6 (DR6L), found in Homo sapiens (Human).